Here is a 586-residue protein sequence, read N- to C-terminus: Phosphomethylpyrimidine synthase (586 aa).

The segment at 1–59 is disordered; the sequence is MKQSVSAEQIELKSSLPGSKKVYVDGPREGMKVPMREIEQSDTNGVPNPPIRVYDTSGP. A compositionally biased stretch (basic and acidic residues) spans 22-39; it reads VYVDGPREGMKVPMREIE. Substrate is bound by residues Asn-193, Met-222, Tyr-251, His-287, 307 to 309, 348 to 351, and Glu-387; these read SRG and DGLR. His-391 contacts Zn(2+). Tyr-414 lines the substrate pocket. His-455 contributes to the Zn(2+) binding site. [4Fe-4S] cluster is bound by residues Cys-535, Cys-538, and Cys-543.

Belongs to the ThiC family. Requires [4Fe-4S] cluster as cofactor.

It carries out the reaction 5-amino-1-(5-phospho-beta-D-ribosyl)imidazole + S-adenosyl-L-methionine = 4-amino-2-methyl-5-(phosphooxymethyl)pyrimidine + CO + 5'-deoxyadenosine + formate + L-methionine + 3 H(+). Its pathway is cofactor biosynthesis; thiamine diphosphate biosynthesis. Its function is as follows. Catalyzes the synthesis of the hydroxymethylpyrimidine phosphate (HMP-P) moiety of thiamine from aminoimidazole ribotide (AIR) in a radical S-adenosyl-L-methionine (SAM)-dependent reaction. In Bacillus cereus (strain Q1), this protein is Phosphomethylpyrimidine synthase.